Consider the following 311-residue polypeptide: Nuclear hormone receptor family member nhr-111 (311 aa).

A DNA-binding region (nuclear receptor) is located at residues 39 to 115 (ITLCAVCGDT…KGMNKNAVQP (77 aa)). 2 consecutive NR C4-type zinc fingers follow at residues 42-62 (CAVC…CFGC) and 78-98 (CWNG…CKSC). The NR LBD domain maps to 116 to 311 (ERTSHSYTVE…KACEIVISFL (196 aa)).

The protein belongs to the nuclear hormone receptor family.

It is found in the nucleus. In terms of biological role, orphan nuclear receptor. The protein is Nuclear hormone receptor family member nhr-111 (nhr-111) of Caenorhabditis elegans.